We begin with the raw amino-acid sequence, 75 residues long: Cruzioseptin-8 (75 aa).

The first 22 residues, 1-22 (MAFLKKCLFLVLFLGLVSLSIC), serve as a signal peptide directing secretion. Residues 23–43 (EEEKREEENEEVQEDDDQSEE) constitute a propeptide that is removed on maturation. A disordered region spans residues 25 to 44 (EKREEENEEVQEDDDQSEEK). A compositionally biased stretch (acidic residues) spans 30-41 (ENEEVQEDDDQS). Gln72 is subject to Glutamine amide. The propeptide occupies 74–75 (EQ).

In terms of tissue distribution, expressed by the skin glands.

The protein localises to the secreted. Has antimicrobial activity. This is Cruzioseptin-8 from Cruziohyla calcarifer (Splendid leaf frog).